The primary structure comprises 558 residues: Formate--tetrahydrofolate ligase (558 aa).

ATP is bound at residue 66–73 (TPAGEGKT).

This sequence belongs to the formate--tetrahydrofolate ligase family.

The catalysed reaction is (6S)-5,6,7,8-tetrahydrofolate + formate + ATP = (6R)-10-formyltetrahydrofolate + ADP + phosphate. The protein operates within one-carbon metabolism; tetrahydrofolate interconversion. The protein is Formate--tetrahydrofolate ligase of Neisseria gonorrhoeae (strain NCCP11945).